Reading from the N-terminus, the 1240-residue chain is DNA polymerase catalytic subunit (1240 aa).

Positions 1–26 (MFCAAGGPASPGGKSAARAASGFFAP) are enriched in low complexity. Disordered regions lie at residues 1 to 65 (MFCA…PAQR), 646 to 695 (GLDK…RETG), and 1103 to 1139 (AAAP…ASKP). Residues 44–56 (NFYNPHLAQTGTQ) are compositionally biased toward polar residues. Acidic residues predominate over residues 669 to 688 (NGDEDKDDDEDGDEDGDERE).

This sequence belongs to the DNA polymerase type-B family. Forms a complex with the ssDNA-binding protein UL29, the DNA polymerase processivity factor, and the alkaline exonuclease. Interacts with the putative helicase-primase complex subunit UL8; this interaction may coordinate leading and lagging strand DNA synthesis at the replication fork.

It localises to the host nucleus. The enzyme catalyses DNA(n) + a 2'-deoxyribonucleoside 5'-triphosphate = DNA(n+1) + diphosphate. It carries out the reaction Endonucleolytic cleavage to 5'-phosphomonoester.. Its function is as follows. Replicates viral genomic DNA. The replication complex is composed of six viral proteins: the DNA polymerase, processivity factor, primase, primase-associated factor, helicase, and ssDNA-binding protein. Additionally, the polymerase contains an intrinsic ribonuclease H (RNase H) activity that specifically degrades RNA/DNA heteroduplexes or duplex DNA substrates in the 5' to 3' direction. Therefore, it can catalyze the excision of the RNA primers that initiate the synthesis of Okazaki fragments at a replication fork during viral DNA replication. The sequence is that of DNA polymerase catalytic subunit from Human herpesvirus 2 (strain 186) (HHV-2).